Here is a 366-residue protein sequence, read N- to C-terminus: Anthranilate phosphoribosyltransferase (366 aa).

5-phospho-alpha-D-ribose 1-diphosphate contacts are provided by residues glycine 103, 106 to 107 (GD), threonine 111, 113 to 116 (NLST), 131 to 139 (KHGNRASSS), and glycine 143. Glycine 103 is a binding site for anthranilate. Serine 115 provides a ligand contact to Mg(2+). Asparagine 134 lines the anthranilate pocket. An anthranilate-binding site is contributed by arginine 189. 2 residues coordinate Mg(2+): aspartate 247 and glutamate 248.

It belongs to the anthranilate phosphoribosyltransferase family. Homodimer. Mg(2+) serves as cofactor.

It catalyses the reaction N-(5-phospho-beta-D-ribosyl)anthranilate + diphosphate = 5-phospho-alpha-D-ribose 1-diphosphate + anthranilate. It participates in amino-acid biosynthesis; L-tryptophan biosynthesis; L-tryptophan from chorismate: step 2/5. Functionally, catalyzes the transfer of the phosphoribosyl group of 5-phosphorylribose-1-pyrophosphate (PRPP) to anthranilate to yield N-(5'-phosphoribosyl)-anthranilate (PRA). The sequence is that of Anthranilate phosphoribosyltransferase from Mycobacterium leprae (strain Br4923).